The primary structure comprises 780 residues: Cyclin-F (780 aa).

A Nuclear localization signal 1 motif is present at residues 20 to 28 (KRRIKRRPR). The F-box domain maps to 29 to 76 (NLTILSLPEDVLFHILKWLSVGDILAVRAVHSHLKYLVDNHASVWASA). The region spanning 288–405 (QASQAVNKQQ…EIISALEGKI (118 aa)) is the Cyclin N-terminal domain. 3 consecutive short sequence motifs (d box) follow at residues 310–313 (RYIL), 343–346 (RRRL), and 349–352 (RYKL). Disordered regions lie at residues 544-594 (QESP…AELS), 651-733 (QESS…STKP), and 745-780 (CRPPNPPESGAHQQPVKRQNLSVHSDEDTNLGFLKL). The short motif at 568–574 (RRSKRKR) is the Nuclear localization signal 2 element. The tract at residues 582 to 761 (RGSFVTTPTA…ESGAHQQPVK (180 aa)) is PEST. Residues 585–594 (FVTTPTAELS) are compositionally biased toward polar residues. Composition is skewed to low complexity over residues 695–708 (SGYSSVSSSSPISS) and 719–731 (STSVLSVGSHSST). The short motif at 762–765 (RQNL) is the D box 4 element.

The protein belongs to the cyclin family. Cyclin AB subfamily. Component of the SCF(CCNF) complex consisting of CUL1, RBX1, SKP1 and CCNF. Interacts with SKP1. Interacts with CUL1. Interacts with CCNB1; interaction is required for nuclear localization of CCNB1. Interacts with CCP110; this interaction leads to CCP110 ubiquitination and degradation via the proteasome pathway. Interacts (via the Cyclin N-terminal domain) with MYBL2/BMYB. Interacts with FZR1/CDH1 (via N-terminus). Interacts with RRM2 (via Cy motif and when phosphorylated at 'Thr-33'); the interaction occurs exclusively in G2 and early M. Interacts with CDC6 (via Cy motif); the interaction takes place during G2 and M phase. Post-translationally, degraded when the spindle assembly checkpoint is activated during the G2-M transition. Degradation is not dependent on the proteasome or ubiquitin and depends on the C-terminal PEST sequence. Phosphorylated just before cells enter into mitosis. In terms of processing, ubiquitinated by the anaphase-promoting complex (APC/C); leading to its degradation by the proteasome.

Its subcellular location is the nucleus. It is found in the cytoplasm. It localises to the perinuclear region. The protein localises to the cytoskeleton. The protein resides in the microtubule organizing center. Its subcellular location is the centrosome. It is found in the centriole. Functionally, substrate recognition component of a SCF (SKP1-CUL1-F-box protein) E3 ubiquitin-protein ligase complex which mediates the ubiquitination and subsequent proteasomal degradation of target proteins. The SCF(CCNF) E3 ubiquitin-protein ligase complex is an integral component of the ubiquitin proteasome system (UPS) and links proteasome degradation to the cell cycle. Mediates the substrate recognition and the proteasomal degradation of various target proteins involved in the regulation of cell cycle progression and in the maintenance of genome stability. Mediates the ubiquitination and subsequent proteasomal degradation of CP110 during G2 phase, thereby acting as an inhibitor of centrosome reduplication. In G2, mediates the ubiquitination and proteasomal degradation of CDC6, thereby suppressing DNA re-replication and preventing genome instability. Involved in the ubiquitination and degradation of the substrate adapter CDH1 of the anaphase-promoting complex (APC/C), thereby acting as an antagonist of APC/C in regulating G1 progression and S phase entry. May play a role in the G2 cell cycle checkpoint control after DNA damage, possibly by promoting the ubiquitination of MYBL2/BMYB. The chain is Cyclin-F (Ccnf) from Rattus norvegicus (Rat).